The primary structure comprises 480 residues: Na(+)/H(+) antiporter NhaA (480 aa).

11 helical membrane passes run 34 to 54, 76 to 96, 113 to 133, 144 to 164, 174 to 194, 197 to 217, 223 to 243, 282 to 302, 312 to 332, 350 to 370, and 381 to 401; these read VGGV…NIPA, LSVA…VAGI, AVLP…VYTL, GWAV…AVIG, FLLT…AIFF, RINF…WLLL, GWYV…NSGV, GLAV…GGAL, LGVV…STWL, IFAV…IGEL, and EVKA…TVLL. The tract at residues 454–480 is disordered; the sequence is AAEKAAAARHGGAEVPGGAGEEDGRPA.

The protein belongs to the NhaA Na(+)/H(+) (TC 2.A.33) antiporter family.

Its subcellular location is the cell membrane. It catalyses the reaction Na(+)(in) + 2 H(+)(out) = Na(+)(out) + 2 H(+)(in). Functionally, na(+)/H(+) antiporter that extrudes sodium in exchange for external protons. This chain is Na(+)/H(+) antiporter NhaA, found in Streptomyces antibioticus.